Here is a 221-residue protein sequence, read N- to C-terminus: Nuclear phosphoprotein UL3 homolog (221 aa).

This sequence belongs to the alphaherpesvirinae HHV-1 UL3 family. Post-translationally, phosphorylated.

The protein resides in the host nucleus. The sequence is that of Nuclear phosphoprotein UL3 homolog from Varicella-zoster virus (strain Oka vaccine) (HHV-3).